The following is a 242-amino-acid chain: Dickkopf-like protein 1 (242 aa).

The N-terminal stretch at 1-30 (MGEASPPAPARRHLLVLLLLLSTLVIPSAA) is a signal peptide. Residues asparagine 97 and asparagine 112 are each glycosylated (N-linked (GlcNAc...) asparagine).

As to quaternary structure, interacts with SLXL1; Co-localize in seminiferous tubules. Interacts with SLY. N-glycosylated during spermatogenesis. Not N-glycosylated in mature sperm. In terms of tissue distribution, more highly expressed in adult testis than in fetal testis. Exclusively expressed in the testis (at protein level). Intense expression in stages II, III and IV of spermatogenesis, whereas expression is lower in stage I.

Its subcellular location is the secreted. It is found in the cytoplasmic vesicle. It localises to the secretory vesicle. The protein localises to the acrosome. Involved in fertilization by facilitating sperm penetration of the zona pellucida. May promote spermatocyte apoptosis, thereby limiting sperm production. In adults, may reduce testosterone synthesis in Leydig cells. Is not essential either for development or fertility. The sequence is that of Dickkopf-like protein 1 from Homo sapiens (Human).